We begin with the raw amino-acid sequence, 245 residues long: Putative outer membrane protein RBE_0022 (245 aa).

The first 23 residues, 1-23 (MIRMSKRLGVILFVSCISINSFA), serve as a signal peptide directing secretion.

Belongs to the OmpW/AlkL family.

The protein resides in the cell outer membrane. This is Putative outer membrane protein RBE_0022 from Rickettsia bellii (strain RML369-C).